We begin with the raw amino-acid sequence, 104 residues long: Large ribosomal subunit protein uL23 (104 aa).

This sequence belongs to the universal ribosomal protein uL23 family. In terms of assembly, part of the 50S ribosomal subunit. Contacts protein L29, and trigger factor when it is bound to the ribosome.

One of the early assembly proteins it binds 23S rRNA. One of the proteins that surrounds the polypeptide exit tunnel on the outside of the ribosome. Forms the main docking site for trigger factor binding to the ribosome. The polypeptide is Large ribosomal subunit protein uL23 (Polynucleobacter asymbioticus (strain DSM 18221 / CIP 109841 / QLW-P1DMWA-1) (Polynucleobacter necessarius subsp. asymbioticus)).